The sequence spans 871 residues: CRISPR system Cmr subunit Cmr2 (871 aa).

The interval 1–215 is not required for target RNA cleavage; sequence MVNIKEKLFV…THLDLTSALS (215 aa). The Mn(2+) site is built by His-13, Asp-14, and His-25. Zn(2+)-binding residues include Cys-448, Cys-451, Cys-478, and Cys-481. A GGDEF domain is found at 592–752; the sequence is KYYAILVMDG…GKDTLAIGLL (161 aa). Positions 600, 656, 673, 674, 694, and 700 each coordinate Mn(2+).

It belongs to the CRISPR system Cmr2 family. As to quaternary structure, part of the type III-B Cmr ribonucleoprotein (RNP) complex, an elongated RNP with Cmr2 and Cmr3 as the base, with Cmr4 and Cmr5 forming a helical core along the mature crRNA (39 or 45 nt in length), while the complex is capped by Cmr6 and Cmr1. The 5' end of the crRNA is bound to Cmr2 and Cmr3, while Cmr6 and a Cmr1 subunit (Cmr1-1 or Cmr1-2) cap the 3' end of the crRNA. The target RNA lies antiparallel to the crRNA, with its 5' end near Cmr1 and Cmr6 and its 3' end near Cmr2 and Cmr3; major target cleavage occurs nears the junction of Cmr1/Cmr6 and Cmr4/Cmr, with minor cleavage occurring at 6 nt intervals which coincide with the proposed spacing of Cmr4 subunits. Forms a 1:1 complex with Cmr3. The Cmr2-Cmr3 complex non-specifically binds ss-target RNA and crRNA. Interacts with Cmr3, Cmr4 and Cmr5. Ca(2+) serves as cofactor. The cofactor is Mn(2+). It depends on Zn(2+) as a cofactor.

It localises to the cytoplasm. Functionally, CRISPR (clustered regularly interspaced short palindromic repeat), is an adaptive immune system that provides protection against mobile genetic elements (viruses, transposable elements and conjugative plasmids). CRISPR clusters contain sequences complementary to antecedent mobile elements and target invading nucleic acids. CRISPR clusters are transcribed and processed into CRISPR RNA (crRNA), formerly called psiRNA (prokaryotic silencing) in this organism. Part of the Cmr ribonucleoprotein complex which has divalent cation-dependent endoribonuclease activity specific for ssRNA complementary to the crRNA (target RNA), generating 5' hydroxy- and 3' phosphate or 2'-3' cyclic phosphate termini. Cmr4 is probably the subunit that cleaves target RNA. Cmr complex does not cleave ssDNA complementary to the crRNA. Cleavage of target RNA is guided by the crRNA; substrate cleavage occurs a fixed distance (14 nt) from the 3' end of the crRNA. In vitro reconstitution shows Cmr1-2 and Cmr5 are not absolutely necessary for target cleavage. The polypeptide is CRISPR system Cmr subunit Cmr2 (Pyrococcus furiosus (strain ATCC 43587 / DSM 3638 / JCM 8422 / Vc1)).